A 187-amino-acid polypeptide reads, in one-letter code: Peptidyl-tRNA hydrolase (187 aa).

Tyr15 is a binding site for tRNA. Catalysis depends on His20, which acts as the Proton acceptor. Residues Phe65, Asn67, and Asn113 each contribute to the tRNA site.

The protein belongs to the PTH family. Monomer.

The protein resides in the cytoplasm. It carries out the reaction an N-acyl-L-alpha-aminoacyl-tRNA + H2O = an N-acyl-L-amino acid + a tRNA + H(+). Its function is as follows. Hydrolyzes ribosome-free peptidyl-tRNAs (with 1 or more amino acids incorporated), which drop off the ribosome during protein synthesis, or as a result of ribosome stalling. In terms of biological role, catalyzes the release of premature peptidyl moieties from peptidyl-tRNA molecules trapped in stalled 50S ribosomal subunits, and thus maintains levels of free tRNAs and 50S ribosomes. The sequence is that of Peptidyl-tRNA hydrolase from Elusimicrobium minutum (strain Pei191).